Consider the following 478-residue polypeptide: Alpha,alpha-trehalose-phosphate synthase [UDP-forming] (478 aa).

2 residues coordinate D-glucose 6-phosphate: Tyr-89 and Asp-143. 2 residues coordinate UDP: Arg-280 and Lys-285. Residues Arg-280 and Lys-285 each coordinate UDP-alpha-D-glucose. Arg-318 is a binding site for D-glucose 6-phosphate. UDP-binding positions include Ile-357 and 383–387; that span reads LVSYE. UDP-alpha-D-glucose is bound by residues Ile-357 and 379-387; that span reads DGMNLVSYE.

Belongs to the glycosyltransferase 20 family.

It catalyses the reaction D-glucose 6-phosphate + UDP-alpha-D-glucose = alpha,alpha-trehalose 6-phosphate + UDP + H(+). It functions in the pathway carbohydrate biosynthesis. Its activity is regulated as follows. Inhibited by validoxylamine A, a non-reactive trehalose analog. In terms of biological role, synthase catalytic subunit of the trehalose synthase complex that catalyzes the production of trehalose from glucose-6-phosphate and UDP-alpha-D-glucose in a two step process. This chain is Alpha,alpha-trehalose-phosphate synthase [UDP-forming], found in Candida albicans (strain SC5314 / ATCC MYA-2876) (Yeast).